The chain runs to 168 residues: Crossover junction endodeoxyribonuclease RuvC (168 aa).

Catalysis depends on residues Asp-8, Glu-68, and Asp-140. The Mg(2+) site is built by Asp-8, Glu-68, and Asp-140.

This sequence belongs to the RuvC family. In terms of assembly, homodimer which binds Holliday junction (HJ) DNA. The HJ becomes 2-fold symmetrical on binding to RuvC with unstacked arms; it has a different conformation from HJ DNA in complex with RuvA. In the full resolvosome a probable DNA-RuvA(4)-RuvB(12)-RuvC(2) complex forms which resolves the HJ. It depends on Mg(2+) as a cofactor.

The protein localises to the cytoplasm. It catalyses the reaction Endonucleolytic cleavage at a junction such as a reciprocal single-stranded crossover between two homologous DNA duplexes (Holliday junction).. The RuvA-RuvB-RuvC complex processes Holliday junction (HJ) DNA during genetic recombination and DNA repair. Endonuclease that resolves HJ intermediates. Cleaves cruciform DNA by making single-stranded nicks across the HJ at symmetrical positions within the homologous arms, yielding a 5'-phosphate and a 3'-hydroxyl group; requires a central core of homology in the junction. The consensus cleavage sequence is 5'-(A/T)TT(C/G)-3'. Cleavage occurs on the 3'-side of the TT dinucleotide at the point of strand exchange. HJ branch migration catalyzed by RuvA-RuvB allows RuvC to scan DNA until it finds its consensus sequence, where it cleaves and resolves the cruciform DNA. The chain is Crossover junction endodeoxyribonuclease RuvC from Gluconacetobacter diazotrophicus (strain ATCC 49037 / DSM 5601 / CCUG 37298 / CIP 103539 / LMG 7603 / PAl5).